The sequence spans 341 residues: Tetraacyldisaccharide 4'-kinase (341 aa).

54–61 provides a ligand contact to ATP; that stretch reads TVGGAGKT.

Belongs to the LpxK family.

It carries out the reaction a lipid A disaccharide + ATP = a lipid IVA + ADP + H(+). It functions in the pathway glycolipid biosynthesis; lipid IV(A) biosynthesis; lipid IV(A) from (3R)-3-hydroxytetradecanoyl-[acyl-carrier-protein] and UDP-N-acetyl-alpha-D-glucosamine: step 6/6. Functionally, transfers the gamma-phosphate of ATP to the 4'-position of a tetraacyldisaccharide 1-phosphate intermediate (termed DS-1-P) to form tetraacyldisaccharide 1,4'-bis-phosphate (lipid IVA). The sequence is that of Tetraacyldisaccharide 4'-kinase from Brucella anthropi (strain ATCC 49188 / DSM 6882 / CCUG 24695 / JCM 21032 / LMG 3331 / NBRC 15819 / NCTC 12168 / Alc 37) (Ochrobactrum anthropi).